Consider the following 77-residue polypeptide: DNA-directed RNA polymerase subunit epsilon (77 aa).

Belongs to the RNA polymerase subunit epsilon family. In terms of assembly, RNAP is composed of a core of 2 alpha, a beta and a beta' subunit. The core is associated with a delta subunit, and at least one of epsilon or omega. When a sigma factor is associated with the core the holoenzyme is formed, which can initiate transcription.

The enzyme catalyses RNA(n) + a ribonucleoside 5'-triphosphate = RNA(n+1) + diphosphate. Functionally, a non-essential component of RNA polymerase (RNAP). This chain is DNA-directed RNA polymerase subunit epsilon, found in Streptococcus pneumoniae (strain Hungary19A-6).